The chain runs to 429 residues: Glycogenin-1 (429 aa).

Residues L8, T10, N11, Y14, and R76 each coordinate UDP. L8, T10, N11, Y14, R76, K85, D101, A102, D103, N132, S133, D159, D162, and Q163 together coordinate UDP-alpha-D-glucose. UDP-binding residues include D101, A102, and D103. Residue D101 coordinates Mn(2+). Residue D103 participates in Mn(2+) binding. O-linked (Glc...) tyrosine glycosylation occurs at Y194. Residues H211, G214, and K217 each contribute to the UDP site. H211 contacts Mn(2+). The UDP-alpha-D-glucose site is built by G214 and K217. 2 disordered regions span residues 254-274 (VFPS…HPKI) and 300-338 (SYDT…QTPH). Basic and acidic residues-rich tracts occupy residues 263-274 (EHRSHSADHPKI) and 309-338 (DSHR…QTPH).

It belongs to the glycosyltransferase 8 family. Glycogenin subfamily. As to quaternary structure, forms a heterooctamer with one molecule of gyg-1 bound to each protomer of the gys-1 homotetramer. The N-terminus of gys-1 is involved in interprotomer contacts with gyg-1. The interaction with gys-1 is required for glycogen production but is not required for gys-1 intrinsic activity. Requires Mn(2+) as cofactor. Self-glycosylated by the transfer of glucose residues from UDP-glucose to itself, forming an alpha-1,4-glycan of around 10 residues attached to Tyr-194.

It localises to the cytoplasm. Its subcellular location is the nucleus. The catalysed reaction is L-tyrosyl-[glycogenin] + UDP-alpha-D-glucose = alpha-D-glucosyl-L-tyrosyl-[glycogenin] + UDP + H(+). It carries out the reaction [1,4-alpha-D-glucosyl](n)-L-tyrosyl-[glycogenin] + UDP-alpha-D-glucose = [1,4-alpha-D-glucosyl](n+1)-L-tyrosyl-[glycogenin] + UDP + H(+). It functions in the pathway glycan biosynthesis; glycogen biosynthesis. In terms of biological role, self-glucosylating initiator of glycogen synthesis. It catalyzes the formation of a short alpha (1,4)-glucosyl chain covalently attached via a glucose 1-O-tyrosyl linkage to internal tyrosine residues and these chains act as primers for the elongation reaction catalyzed by glycogen synthase. The chain is Glycogenin-1 from Caenorhabditis elegans.